The following is a 20-amino-acid chain: Cytochrome c oxidase subunit 7B-heart, mitochondrial (20 aa).

This sequence belongs to the cytochrome c oxidase VIIb family. As to quaternary structure, component of the cytochrome c oxidase (complex IV, CIV), a multisubunit enzyme composed of 14 subunits. The complex is composed of a catalytic core of 3 subunits MT-CO1, MT-CO2 and MT-CO3, encoded in the mitochondrial DNA, and 11 supernumerary subunits COX4I, COX5A, COX5B, COX6A, COX6B, COX6C, COX7A, COX7B, COX7C, COX8 and NDUFA4, which are encoded in the nuclear genome. The complex exists as a monomer or a dimer and forms supercomplexes (SCs) in the inner mitochondrial membrane with NADH-ubiquinone oxidoreductase (complex I, CI) and ubiquinol-cytochrome c oxidoreductase (cytochrome b-c1 complex, complex III, CIII), resulting in different assemblies (supercomplex SCI(1)III(2)IV(1) and megacomplex MCI(2)III(2)IV(2)).

It is found in the mitochondrion inner membrane. The catalysed reaction is 4 Fe(II)-[cytochrome c] + O2 + 8 H(+)(in) = 4 Fe(III)-[cytochrome c] + 2 H2O + 4 H(+)(out). It participates in energy metabolism; oxidative phosphorylation. In terms of biological role, component of the cytochrome c oxidase, the last enzyme in the mitochondrial electron transport chain which drives oxidative phosphorylation. The respiratory chain contains 3 multisubunit complexes succinate dehydrogenase (complex II, CII), ubiquinol-cytochrome c oxidoreductase (cytochrome b-c1 complex, complex III, CIII) and cytochrome c oxidase (complex IV, CIV), that cooperate to transfer electrons derived from NADH and succinate to molecular oxygen, creating an electrochemical gradient over the inner membrane that drives transmembrane transport and the ATP synthase. Cytochrome c oxidase is the component of the respiratory chain that catalyzes the reduction of oxygen to water. Electrons originating from reduced cytochrome c in the intermembrane space (IMS) are transferred via the dinuclear copper A center (CU(A)) of subunit 2 and heme A of subunit 1 to the active site in subunit 1, a binuclear center (BNC) formed by heme A3 and copper B (CU(B)). The BNC reduces molecular oxygen to 2 water molecules using 4 electrons from cytochrome c in the IMS and 4 protons from the mitochondrial matrix. This is Cytochrome c oxidase subunit 7B-heart, mitochondrial from Thunnus obesus (Bigeye tuna).